Here is a 544-residue protein sequence, read N- to C-terminus: MAAKDVQFGNEVRQKMVNGVNILANAVRVTLGPKGRNVVVDRAFGGPHITKDGVTVAKEIELKDKFENMGAQMVKEVASKTNDVAGDGTTTATVLAQSIVAEGIKAVTAGMNPTDLKRGIDKAVAALVEELKNIAKPCDTSKEIAQVGSISANSDEQVGAIIAEAMEKVGKEGVITVEDGKSLENELDVVEGMQFDRGYLSPYFINDAEKQIAGLDNPFVLLFDKKISNIRDLLPVLEQVAKASRPLLIIAEDVEGEALATLVVNNIRGVLKTVAVKAPGFGDRRKAMLQDIAILTGAVVISEEVGLSLEKATLDDLGQAKRIEIGKENTTVIDGFGDAAQIEARVAEIRQQIETATSDYDKEKLQERVAKLAGGVAVIKVGAATEVEMKEKKDRVEDALHATRAAVEEGVVAGGGVALLRARAALENLHTGNADQDAGVQIVLRAVESPLRQIVANAGGEPSVVVNKVLEGKGNYGYNAGSGEYGDMIGMGVLDPAKVTRSALQHAASIAGLMLTTDCMIAEIPEEKPAVPDMGGMGGMGGMM.

ATP is bound by residues 30–33 (TLGP), lysine 51, 87–91 (DGTTT), glycine 415, and aspartate 495.

The protein belongs to the chaperonin (HSP60) family. In terms of assembly, forms a cylinder of 14 subunits composed of two heptameric rings stacked back-to-back. Interacts with the co-chaperonin GroES.

It localises to the cell outer membrane. The catalysed reaction is ATP + H2O + a folded polypeptide = ADP + phosphate + an unfolded polypeptide.. Its function is as follows. Together with its co-chaperonin GroES, plays an essential role in assisting protein folding. The GroEL-GroES system forms a nano-cage that allows encapsulation of the non-native substrate proteins and provides a physical environment optimized to promote and accelerate protein folding. The sequence is that of Chaperonin GroEL from Neisseria gonorrhoeae.